The chain runs to 567 residues: MEGVRVPIACALILLAISSITSASIVEHTFNVQNLTVSRLCKRQVITVVNGSLPGPTIRVKEGDSLVIHVLNHSPHNITIHWHGIFHKLTVWADGPSMITQCPIQPGQRYAYRFNITGQEGTLWWHAHASFLRATVYGALVIRPKSGHSYPFPKPHKEVPILFGEWWNTDVVALEEAAIATGVPPNNSDAYTINGRPGNLYPCSKDRMFSLNVVKGKRYLLRIINAAMNIQLFFKIANHRLTVVAADAVYTAPYVTDVIVIAPGQTIDALLFADQSVDTSYYMAAHPYASAPAVPFPNTTTRGVIHYGGASKTGRSKPVLMPKLPSFFDTLTAYRFYSNLTALVNGPHWVPVPRYVDEEMLVTIGLGLEACADNTTCPKFSASMSNHSFVLPKKLSILEAVFHDVKGIFTADFPDQPPVKFDYTNPNVTQTNPGLLFTQKSTSAKILKFNTTVEVVLQNHALIAAESHPMHLHGFNFHVLAQGFGNYDPSRDRSKLNLVDPQSRNTLAVPVGGWAVIRFTANNPGAWIFHCHIDVHLPFGLGMIFVVKNGPTKSTTLPPPPPDLPKC.

The signal sequence occupies residues 1-23 (MEGVRVPIACALILLAISSITSA). Plastocyanin-like domains follow at residues 31–147 (NVQN…PKSG) and 157–310 (KEVP…YGGA). Asn-34, Asn-50, and Asn-77 each carry an N-linked (GlcNAc...) asparagine glycan. His-81 and His-83 together coordinate Cu cation. An N-linked (GlcNAc...) asparagine glycan is attached at Asn-115. Positions 126 and 128 each coordinate Cu cation. Asn-186, Asn-298, Asn-339, Asn-374, Asn-386, Asn-427, and Asn-450 each carry an N-linked (GlcNAc...) asparagine glycan. Positions 412-551 (DFPDQPPVKF…GMIFVVKNGP (140 aa)) constitute a Plastocyanin-like 3 domain. Cu cation-binding residues include His-468, His-471, His-473, His-530, Cys-531, His-532, and His-536.

Belongs to the multicopper oxidase family. The cofactor is Cu cation. In terms of tissue distribution, predominantly expressed in tissues other than the inflorescence stem.

It is found in the secreted. It localises to the extracellular space. Its subcellular location is the apoplast. It carries out the reaction 4 hydroquinone + O2 = 4 benzosemiquinone + 2 H2O. In terms of biological role, lignin degradation and detoxification of lignin-derived products. This Arabidopsis thaliana (Mouse-ear cress) protein is Laccase-7 (LAC7).